A 293-amino-acid chain; its full sequence is Acetylglutamate kinase (293 aa).

Substrate contacts are provided by residues 65–66, Arg87, and Asn188; that span reads GG.

The protein belongs to the acetylglutamate kinase family. ArgB subfamily.

It localises to the cytoplasm. The enzyme catalyses N-acetyl-L-glutamate + ATP = N-acetyl-L-glutamyl 5-phosphate + ADP. It participates in amino-acid biosynthesis; L-arginine biosynthesis; N(2)-acetyl-L-ornithine from L-glutamate: step 2/4. In terms of biological role, catalyzes the ATP-dependent phosphorylation of N-acetyl-L-glutamate. The chain is Acetylglutamate kinase from Symbiobacterium thermophilum (strain DSM 24528 / JCM 14929 / IAM 14863 / T).